The chain runs to 301 residues: Ribonuclease Z (301 aa).

7 residues coordinate Zn(2+): His-60, His-62, Asp-64, His-65, His-137, Asp-207, and His-265. Asp-64 (proton acceptor) is an active-site residue.

Belongs to the RNase Z family. In terms of assembly, homodimer. It depends on Zn(2+) as a cofactor.

It carries out the reaction Endonucleolytic cleavage of RNA, removing extra 3' nucleotides from tRNA precursor, generating 3' termini of tRNAs. A 3'-hydroxy group is left at the tRNA terminus and a 5'-phosphoryl group is left at the trailer molecule.. Its function is as follows. Zinc phosphodiesterase, which displays some tRNA 3'-processing endonuclease activity. Probably involved in tRNA maturation, by removing a 3'-trailer from precursor tRNA. The sequence is that of Ribonuclease Z from Exiguobacterium sp. (strain ATCC BAA-1283 / AT1b).